The following is a 142-amino-acid chain: ATP synthase epsilon chain (142 aa).

Belongs to the ATPase epsilon chain family. As to quaternary structure, F-type ATPases have 2 components, CF(1) - the catalytic core - and CF(0) - the membrane proton channel. CF(1) has five subunits: alpha(3), beta(3), gamma(1), delta(1), epsilon(1). CF(0) has three main subunits: a, b and c.

Its subcellular location is the cell inner membrane. In terms of biological role, produces ATP from ADP in the presence of a proton gradient across the membrane. The chain is ATP synthase epsilon chain from Shewanella oneidensis (strain ATCC 700550 / JCM 31522 / CIP 106686 / LMG 19005 / NCIMB 14063 / MR-1).